The chain runs to 314 residues: L-lactate dehydrogenase 1 (314 aa).

Residues valine 16, aspartate 37, lysine 42, tyrosine 68, and 82–83 (GL) contribute to the NAD(+) site. Residues glutamine 85, arginine 91, and 123–126 (NPVD) contribute to the substrate site. NAD(+) is bound by residues 121–123 (ATN) and serine 146. Residue 151–154 (DSAR) coordinates substrate. Arginine 156 and histidine 171 together coordinate beta-D-fructose 1,6-bisphosphate. The active-site Proton acceptor is the histidine 178. Position 223 is a phosphotyrosine (tyrosine 223). Threonine 232 lines the substrate pocket.

Belongs to the LDH/MDH superfamily. LDH family. As to quaternary structure, homotetramer.

It is found in the cytoplasm. The enzyme catalyses (S)-lactate + NAD(+) = pyruvate + NADH + H(+). It participates in fermentation; pyruvate fermentation to lactate; (S)-lactate from pyruvate: step 1/1. With respect to regulation, allosterically activated by fructose 1,6-bisphosphate (FBP). In terms of biological role, catalyzes the conversion of lactate to pyruvate. The sequence is that of L-lactate dehydrogenase 1 from Bacillus anthracis.